Reading from the N-terminus, the 173-residue chain is ADP-ribosylation factor-like protein 11 (173 aa).

Residue Gly-2 is the site of N-myristoyl glycine attachment. GTP contacts are provided by residues 17 to 24, 61 to 65, and 120 to 123; these read GLDCAGKT, DIGGQ, and NKQE.

It belongs to the small GTPase superfamily. Arf family.

In terms of biological role, may play a role in apoptosis. May act as a tumor suppressor. This is ADP-ribosylation factor-like protein 11 (Arl11) from Rattus norvegicus (Rat).